We begin with the raw amino-acid sequence, 170 residues long: MDLKNYVASIENYPKEGIIFRDITPLMNDGEAYKYATEKIVEFAKDHHIDIVVGPEARGFIFGCPVSYALGVGFVPVRKPGKLPREVIEYAYDLEYGSNKLCLHKDSIKPGQKVLVVDDLLATGGTVEATIKLVEELGGVVAGLAFLIELVDLKGRERLDKYPMITLMQY.

The protein belongs to the purine/pyrimidine phosphoribosyltransferase family. Homodimer.

The protein localises to the cytoplasm. It catalyses the reaction AMP + diphosphate = 5-phospho-alpha-D-ribose 1-diphosphate + adenine. The protein operates within purine metabolism; AMP biosynthesis via salvage pathway; AMP from adenine: step 1/1. Its function is as follows. Catalyzes a salvage reaction resulting in the formation of AMP, that is energically less costly than de novo synthesis. This is Adenine phosphoribosyltransferase from Fusobacterium nucleatum subsp. nucleatum (strain ATCC 25586 / DSM 15643 / BCRC 10681 / CIP 101130 / JCM 8532 / KCTC 2640 / LMG 13131 / VPI 4355).